The following is a 462-amino-acid chain: Probable protein phosphatase 2C 1 (462 aa).

A PPM-type phosphatase domain is found at Ser60 to Leu362. Positions 95, 96, 307, and 353 each coordinate Mn(2+). Disordered regions lie at residues Glu369–Glu394 and Glu421–Val443. Over residues Gln376–Val385 the composition is skewed to polar residues. Basic and acidic residues predominate over residues Asn424 to Glu434.

The protein belongs to the PP2C family. As to quaternary structure, interacts with GCN5. Mg(2+) is required as a cofactor. The cofactor is Mn(2+).

It catalyses the reaction O-phospho-L-seryl-[protein] + H2O = L-seryl-[protein] + phosphate. The catalysed reaction is O-phospho-L-threonyl-[protein] + H2O = L-threonyl-[protein] + phosphate. Its function is as follows. May act as negative regulator of GCN5. In Arabidopsis thaliana (Mouse-ear cress), this protein is Probable protein phosphatase 2C 1 (PPC6-6).